The following is a 569-amino-acid chain: 2-succinyl-5-enolpyruvyl-6-hydroxy-3-cyclohexene-1-carboxylate synthase (569 aa).

The protein belongs to the TPP enzyme family. MenD subfamily. Homodimer. It depends on Mg(2+) as a cofactor. Requires Mn(2+) as cofactor. Thiamine diphosphate is required as a cofactor.

It catalyses the reaction isochorismate + 2-oxoglutarate + H(+) = 5-enolpyruvoyl-6-hydroxy-2-succinyl-cyclohex-3-ene-1-carboxylate + CO2. The protein operates within quinol/quinone metabolism; 1,4-dihydroxy-2-naphthoate biosynthesis; 1,4-dihydroxy-2-naphthoate from chorismate: step 2/7. It participates in cofactor biosynthesis; phylloquinone biosynthesis. Catalyzes the thiamine diphosphate-dependent decarboxylation of 2-oxoglutarate and the subsequent addition of the resulting succinic semialdehyde-thiamine pyrophosphate anion to isochorismate to yield 2-succinyl-5-enolpyruvyl-6-hydroxy-3-cyclohexene-1-carboxylate (SEPHCHC). This chain is 2-succinyl-5-enolpyruvyl-6-hydroxy-3-cyclohexene-1-carboxylate synthase, found in Microcystis aeruginosa (strain NIES-843 / IAM M-2473).